The sequence spans 529 residues: MTLSPYLQEVAKRRTFAIISHPDAGKTTITEKVLLFGQAIQTAGTVKGRGSSQHAKSDWMEMEKQRGISITTSVMQFPYHDCLVNLLDTPGHEDFSEDTYRTLTAVDCCLMVIDAAKGVEDRTRKLMEVTRLRDTPILTFMNKLDRDIRDPMELLDEVENELKIGCAPITWPIGCGKLFKGVYHLYKDETYLYQTGKGHTIQEVRIVKGLDNPELDAAVGEDLAQQLRDELELVQGASNEFDHELFLAGEITPVFFGTALGNFGVDHMLDGLVEWAPAPMPRQTDTRTVEAKEEKFTGFVFKIQANMDPKHRDRVAFMRVVSGKYEKGMKMRQVRIGKDVVISDALTFMAGDRSHVEEAYPGDILGLHNHGTIQIGDTFTQGEMMKFTGIPNFAPELFRRIRLKDPLKQKQLLKGLVQLSEEGAVQVFRPIANNDLIVGAVGVLQFDVVVARLKSEYNVEAIYESVNVATARWVECTDAKKFEEFKRKNEVQLALDGGDNLTYIAPTMVNLNLTQERYPDVQFRKTREH.

Positions 11–280 constitute a tr-type G domain; sequence AKRRTFAIIS…GLVEWAPAPM (270 aa). Residues 20–27, 88–92, and 142–145 contribute to the GTP site; these read SHPDAGKT, DTPGH, and NKLD.

The protein belongs to the TRAFAC class translation factor GTPase superfamily. Classic translation factor GTPase family. PrfC subfamily.

The protein resides in the cytoplasm. Functionally, increases the formation of ribosomal termination complexes and stimulates activities of RF-1 and RF-2. It binds guanine nucleotides and has strong preference for UGA stop codons. It may interact directly with the ribosome. The stimulation of RF-1 and RF-2 is significantly reduced by GTP and GDP, but not by GMP. The protein is Peptide chain release factor 3 of Citrobacter koseri (strain ATCC BAA-895 / CDC 4225-83 / SGSC4696).